The primary structure comprises 373 residues: Dual-specificity RNA methyltransferase RlmN (373 aa).

E91 (proton acceptor) is an active-site residue. One can recognise a Radical SAM core domain in the interval 97–339 (EDDRGTLCIS…TTVRKTRGDD (243 aa)). Residues C104 and C344 are joined by a disulfide bond. Positions 111, 115, and 118 each coordinate [4Fe-4S] cluster. S-adenosyl-L-methionine-binding positions include 165 to 166 (GE), S197, 219 to 221 (SLH), and N301. C344 (S-methylcysteine intermediate) is an active-site residue.

Belongs to the radical SAM superfamily. RlmN family. Requires [4Fe-4S] cluster as cofactor.

It localises to the cytoplasm. It carries out the reaction adenosine(2503) in 23S rRNA + 2 reduced [2Fe-2S]-[ferredoxin] + 2 S-adenosyl-L-methionine = 2-methyladenosine(2503) in 23S rRNA + 5'-deoxyadenosine + L-methionine + 2 oxidized [2Fe-2S]-[ferredoxin] + S-adenosyl-L-homocysteine. It catalyses the reaction adenosine(37) in tRNA + 2 reduced [2Fe-2S]-[ferredoxin] + 2 S-adenosyl-L-methionine = 2-methyladenosine(37) in tRNA + 5'-deoxyadenosine + L-methionine + 2 oxidized [2Fe-2S]-[ferredoxin] + S-adenosyl-L-homocysteine. In terms of biological role, specifically methylates position 2 of adenine 2503 in 23S rRNA and position 2 of adenine 37 in tRNAs. m2A2503 modification seems to play a crucial role in the proofreading step occurring at the peptidyl transferase center and thus would serve to optimize ribosomal fidelity. The sequence is that of Dual-specificity RNA methyltransferase RlmN from Paracidovorax citrulli (strain AAC00-1) (Acidovorax citrulli).